The chain runs to 390 residues: Precorrin-6Y C(5,15)-methyltransferase [decarboxylating] (390 aa).

Belongs to the precorrin methyltransferase family.

The catalysed reaction is precorrin-6B + 2 S-adenosyl-L-methionine = precorrin-8X + 2 S-adenosyl-L-homocysteine + CO2 + 3 H(+). The protein operates within cofactor biosynthesis; adenosylcobalamin biosynthesis; cob(II)yrinate a,c-diamide from precorrin-2 (aerobic route): step 7/10. In terms of biological role, catalyzes the methylation of both C-5 and C-15 in precorrin-6Y to form precorrin-8X. In Mycobacterium tuberculosis (strain ATCC 25618 / H37Rv), this protein is Precorrin-6Y C(5,15)-methyltransferase [decarboxylating] (cobL).